Reading from the N-terminus, the 613-residue chain is Dihydroxy-acid dehydratase (613 aa).

Position 81 (D81) interacts with Mg(2+). C122 provides a ligand contact to [2Fe-2S] cluster. Positions 123 and 124 each coordinate Mg(2+). The residue at position 124 (K124) is an N6-carboxylysine. C195 contacts [2Fe-2S] cluster. E491 contributes to the Mg(2+) binding site. The active-site Proton acceptor is S517.

The protein belongs to the IlvD/Edd family. Homodimer. Requires [2Fe-2S] cluster as cofactor. Mg(2+) serves as cofactor.

The enzyme catalyses (2R)-2,3-dihydroxy-3-methylbutanoate = 3-methyl-2-oxobutanoate + H2O. The catalysed reaction is (2R,3R)-2,3-dihydroxy-3-methylpentanoate = (S)-3-methyl-2-oxopentanoate + H2O. It participates in amino-acid biosynthesis; L-isoleucine biosynthesis; L-isoleucine from 2-oxobutanoate: step 3/4. It functions in the pathway amino-acid biosynthesis; L-valine biosynthesis; L-valine from pyruvate: step 3/4. Functionally, functions in the biosynthesis of branched-chain amino acids. Catalyzes the dehydration of (2R,3R)-2,3-dihydroxy-3-methylpentanoate (2,3-dihydroxy-3-methylvalerate) into 2-oxo-3-methylpentanoate (2-oxo-3-methylvalerate) and of (2R)-2,3-dihydroxy-3-methylbutanoate (2,3-dihydroxyisovalerate) into 2-oxo-3-methylbutanoate (2-oxoisovalerate), the penultimate precursor to L-isoleucine and L-valine, respectively. This chain is Dihydroxy-acid dehydratase, found in Vibrio atlanticus (strain LGP32) (Vibrio splendidus (strain Mel32)).